We begin with the raw amino-acid sequence, 201 residues long: MAEKFTQHTGLVVPLDAANVDTDAIIPKQFLQKVTRTGFGAHLFNDWRFLDEKGQQPNPEFVLNFPEYQGASILLARENFGCGSSREHAPWALTDYGFKVVIAPSFADIFYGNSFNNQLLPVKLSDEQVDELFTLVKANPGIKFEVDLEAQVVKAGDKTYSFKIDDFRRHCMLNGLDSIGLTLQHEDAIAEYENKQPAFMR.

This sequence belongs to the LeuD family. LeuD type 1 subfamily. Heterodimer of LeuC and LeuD.

It catalyses the reaction (2R,3S)-3-isopropylmalate = (2S)-2-isopropylmalate. It participates in amino-acid biosynthesis; L-leucine biosynthesis; L-leucine from 3-methyl-2-oxobutanoate: step 2/4. Its function is as follows. Catalyzes the isomerization between 2-isopropylmalate and 3-isopropylmalate, via the formation of 2-isopropylmaleate. The polypeptide is 3-isopropylmalate dehydratase small subunit (Salmonella paratyphi A (strain ATCC 9150 / SARB42)).